A 256-amino-acid chain; its full sequence is Thyroid transcription factor 1-associated protein 26 homolog (256 aa).

Disordered stretches follow at residues 1 to 35 and 72 to 190; these read MAPF…AKRK and RKER…KQEY. Positions 89–104 are enriched in basic and acidic residues; it reads YPEHLKHLYLAERERL. Polar residues predominate over residues 136-185; sequence LGSSSSEKNITNTSTDQTIAPASSNEPAQPESSHKTTFFQRKQNISSYQK.

It belongs to the TAP26 family.

In Danio rerio (Zebrafish), this protein is Thyroid transcription factor 1-associated protein 26 homolog (ccdc59).